The primary structure comprises 317 residues: HTH-type transcriptional regulator CfxR (317 aa).

The region spanning 8–65 (LTLRQLQIFVTVARHASFVRAAEELHLTQPAVSMQVKQLESVVGMALFERVKGQLTLT) is the HTH lysR-type domain. A DNA-binding region (H-T-H motif) is located at residues 25 to 44 (FVRAAEELHLTQPAVSMQVK).

Belongs to the LysR transcriptional regulatory family.

Its function is as follows. Trans-acting transcriptional regulator of RuBisCO genes (cfxLS) expression. This Cupriavidus necator (strain ATCC 17699 / DSM 428 / KCTC 22496 / NCIMB 10442 / H16 / Stanier 337) (Ralstonia eutropha) protein is HTH-type transcriptional regulator CfxR (cfxR).